Consider the following 157-residue polypeptide: Succinate dehydrogenase assembly factor 2-A, mitochondrial (157 aa).

Residues Met1–Cys21 constitute a mitochondrion transit peptide.

The protein belongs to the SDHAF2 family. As to quaternary structure, interacts with the flavoprotein subunit within the SDH catalytic dimer.

It localises to the mitochondrion matrix. Its function is as follows. Plays an essential role in the assembly of succinate dehydrogenase (SDH), an enzyme complex (also referred to as respiratory complex II) that is a component of both the tricarboxylic acid (TCA) cycle and the mitochondrial electron transport chain, and which couples the oxidation of succinate to fumarate with the reduction of ubiquinone (coenzyme Q) to ubiquinol. Required for flavinylation (covalent attachment of FAD) of the flavoprotein subunit of the SDH catalytic dimer. The polypeptide is Succinate dehydrogenase assembly factor 2-A, mitochondrial (Drosophila mojavensis (Fruit fly)).